The following is a 33-amino-acid chain: Neurotoxin Nk-3FTx (33 aa).

2 disulfides stabilise this stretch: C3/C24 and C6/C11.

Expressed by the venom gland.

It is found in the secreted. Functionally, possible voltage-gated potassium channel (Kv) blocker. Decreases amplitude of compound action potential and conduction velocity in toad sciatic nerve. Has only mild anticoagulant activity even at a concentration of 5ug/ml. Shows no cytotoxicity towards human cell lines. The protein is Neurotoxin Nk-3FTx of Naja kaouthia (Monocled cobra).